The chain runs to 357 residues: DNA replication and repair protein RecF (357 aa).

Residue 30-37 (GANGSGKT) coordinates ATP.

Belongs to the RecF family.

It is found in the cytoplasm. Functionally, the RecF protein is involved in DNA metabolism; it is required for DNA replication and normal SOS inducibility. RecF binds preferentially to single-stranded, linear DNA. It also seems to bind ATP. The polypeptide is DNA replication and repair protein RecF (Escherichia coli O139:H28 (strain E24377A / ETEC)).